Consider the following 475-residue polypeptide: Dihydrolipoyl dehydrogenase (475 aa).

Residues 36-45 (ERYSTLGGVC), K54, and G117 each bind FAD. Residues C45 and C50 are joined by a disulfide bond. NAD(+)-binding positions include 182–186 (GGGII), E205, V238, and 270–273 (AIGR). 2 residues coordinate FAD: D313 and A321. H445 (proton acceptor) is an active-site residue.

This sequence belongs to the class-I pyridine nucleotide-disulfide oxidoreductase family. FAD serves as cofactor.

The protein localises to the cytoplasm. It carries out the reaction N(6)-[(R)-dihydrolipoyl]-L-lysyl-[protein] + NAD(+) = N(6)-[(R)-lipoyl]-L-lysyl-[protein] + NADH + H(+). The branched-chain alpha-keto dehydrogenase complex catalyzes the overall conversion of alpha-keto acids to acyl-CoA and CO(2). It contains multiple copies of 3 enzymatic components: branched-chain alpha-keto acid decarboxylase (E1), lipoamide acyltransferase (E2) and lipoamide dehydrogenase (E3). This Vibrio parahaemolyticus serotype O3:K6 (strain RIMD 2210633) protein is Dihydrolipoyl dehydrogenase (lpd).